Reading from the N-terminus, the 332-residue chain is Delta-aminolevulinic acid dehydratase (332 aa).

Lys199 serves as the catalytic Schiff-base intermediate with substrate. Residues Arg209 and Lys221 each contribute to the 5-aminolevulinate site. Glu237 is a Mg(2+) binding site. Lys252 acts as the Schiff-base intermediate with substrate in catalysis. 5-aminolevulinate contacts are provided by Ser278 and Tyr317.

Belongs to the ALAD family. In terms of assembly, homooctamer.

The enzyme catalyses 2 5-aminolevulinate = porphobilinogen + 2 H2O + H(+). Its pathway is porphyrin-containing compound metabolism; protoporphyrin-IX biosynthesis; coproporphyrinogen-III from 5-aminolevulinate: step 1/4. In terms of biological role, catalyzes an early step in the biosynthesis of tetrapyrroles. Binds two molecules of 5-aminolevulinate per subunit, each at a distinct site, and catalyzes their condensation to form porphobilinogen. In Chlamydia pneumoniae (Chlamydophila pneumoniae), this protein is Delta-aminolevulinic acid dehydratase (hemB).